A 343-amino-acid polypeptide reads, in one-letter code: uncharacterized protein (343 aa).

Disordered regions lie at residues 1–25, 62–119, and 169–188; these read MSSK…LSGT, KNIR…DCSD, and NPKI…TKKS. Over residues 62 to 71 the composition is skewed to basic residues; the sequence is KNIRQFKKSQ. Residues 72-81 show a composition bias toward basic and acidic residues; it reads NKTDTEKSGE. Acidic residues predominate over residues 83 to 107; that stretch reads NDSDYSDYSDNSDDVDDLDDVDDLN.

This is an uncharacterized protein from Acanthamoeba polyphaga (Amoeba).